The primary structure comprises 73 residues: Protein SlyX homolog (73 aa).

This sequence belongs to the SlyX family.

The sequence is that of Protein SlyX homolog from Histophilus somni (strain 2336) (Haemophilus somnus).